Here is a 274-residue protein sequence, read N- to C-terminus: Mitochondrial outer membrane protein porin 3 (274 aa).

Position 76 is a phosphoserine (serine 76).

It belongs to the eukaryotic mitochondrial porin (TC 1.B.8.1) family. As to quaternary structure, interacts with KIN14F/KP1. Interacts with FBA6 and GAPC1. As to expression, expressed in leaf tips, anthers and stigma.

The protein resides in the cell membrane. It is found in the mitochondrion outer membrane. Its function is as follows. Forms a channel through the mitochondrial outer membrane that allows diffusion of small hydrophilic molecules. The channel adopts an open conformation at low or zero membrane potential and a closed conformation at potentials above 30-40 mV. The open state has a weak anion selectivity whereas the closed state is cation-selective. The polypeptide is Mitochondrial outer membrane protein porin 3 (VDAC3) (Arabidopsis thaliana (Mouse-ear cress)).